The chain runs to 175 residues: NAD(P)H-quinone oxidoreductase subunit J (175 aa).

It belongs to the complex I 30 kDa subunit family. As to quaternary structure, NDH-1 can be composed of about 15 different subunits; different subcomplexes with different compositions have been identified which probably have different functions.

It localises to the cellular thylakoid membrane. It catalyses the reaction a plastoquinone + NADH + (n+1) H(+)(in) = a plastoquinol + NAD(+) + n H(+)(out). The catalysed reaction is a plastoquinone + NADPH + (n+1) H(+)(in) = a plastoquinol + NADP(+) + n H(+)(out). NDH-1 shuttles electrons from an unknown electron donor, via FMN and iron-sulfur (Fe-S) centers, to quinones in the respiratory and/or the photosynthetic chain. The immediate electron acceptor for the enzyme in this species is believed to be plastoquinone. Couples the redox reaction to proton translocation, and thus conserves the redox energy in a proton gradient. Cyanobacterial NDH-1 also plays a role in inorganic carbon-concentration. The chain is NAD(P)H-quinone oxidoreductase subunit J from Trichormus variabilis (strain ATCC 29413 / PCC 7937) (Anabaena variabilis).